The following is a 426-amino-acid chain: Probable serine/threonine-protein kinase PBL2 (426 aa).

The tract at residues 1–54 is disordered; it reads MGNCLDSSAKVDNSNHSPHANSASSGSKVSSKTSRSTGPSGLSTTSYSTDSSFG. The N-myristoyl glycine moiety is linked to residue G2. C4 carries S-palmitoyl cysteine lipidation. The segment covering 14–38 has biased composition (low complexity); it reads SNHSPHANSASSGSKVSSKTSRSTG. Residues 39-52 are compositionally biased toward polar residues; that stretch reads PSGLSTTSYSTDSS. Residue T75 is modified to Phosphothreonine. The Protein kinase domain maps to 86-369; it reads FRQDNLLGEG…SEVLVTLEQL (284 aa). Residues 92-100 and K124 contribute to the ATP site; that span reads LGEGGFGCV. Phosphotyrosine is present on Y169. Residue D219 is the Proton acceptor of the active site. S253 is subject to O-UMP-serine. Position 253 is a phosphoserine (S253). Residues T254 and T259 each carry the phosphothreonine modification. T254 is modified (O-UMP-threonine). Position 267 is a phosphotyrosine (Y267). Residues 374-426 form a disordered region; that stretch reads KPGTKHTQMESPRFHHSSVMQKSPVRYSHDRPLLHMTPGASPLPSYTQSPRVR. Residues 417–426 show a composition bias toward polar residues; that stretch reads PSYTQSPRVR.

It belongs to the protein kinase superfamily. Ser/Thr protein kinase family. As to quaternary structure, interacts with FLS2. Interacts with the Xanthomonas campestris effector XopAC/AvrAC; the recognition of X.campestris effector XopAC/AvrAC requires the presence of RKS1 and RPP13L4/ZAR1. Component of a stable high-order oligomeric complex made of RKS1 and RPP13L4/ZAR1 which recruits X.campestris effector XopAC/AvrAC-mediated uridylylated PBL2 in the presence of ATP to form a wheel-like pentameric resistosome; this complex triggers immunity toward X.campestris in vascular tissues. Binds to RKS1 when uridylylated. In terms of processing, uridylylated at Ser-253 and Thr-254 by Xanthomonas campestris effector AvrAC/XopAC; this uridylylation is necessary for specific recruitment to RKS1 and to trigger immunity. As to expression, strongly expressed in leaves, moderately in roots, and barely in flowers, mostly in pedicels.

The protein localises to the cell membrane. It is found in the nucleus. It carries out the reaction L-seryl-[protein] + ATP = O-phospho-L-seryl-[protein] + ADP + H(+). It catalyses the reaction L-threonyl-[protein] + ATP = O-phospho-L-threonyl-[protein] + ADP + H(+). In terms of biological role, involved in disease resistance signaling. Contributes to pathogen-associated molecular pattern (PAMP)-triggered immunity (PTI) signaling and defense responses downstream of FLS2. Acts as a BIK1 decoy and enables Xanthomonas campestris AvrAC/XopAC detection; X.campestris effector AvrAC/XopAC-mediated uridylylation promotes the formation of a complex with RKS1 and RPP13L4/ZAR1 which, in turn, activates effector-triggered immunity (ETI) against X.campestris. Promotes, when uridylylated by AvrAC/XopAC, the release of ADP from the inactive RKS1-ZAR1 complex, thus activating the resistosome. This Arabidopsis thaliana (Mouse-ear cress) protein is Probable serine/threonine-protein kinase PBL2.